Consider the following 364-residue polypeptide: Aminomethyltransferase (364 aa).

Belongs to the GcvT family. In terms of assembly, the glycine cleavage system is composed of four proteins: P, T, L and H.

It carries out the reaction N(6)-[(R)-S(8)-aminomethyldihydrolipoyl]-L-lysyl-[protein] + (6S)-5,6,7,8-tetrahydrofolate = N(6)-[(R)-dihydrolipoyl]-L-lysyl-[protein] + (6R)-5,10-methylene-5,6,7,8-tetrahydrofolate + NH4(+). The glycine cleavage system catalyzes the degradation of glycine. The sequence is that of Aminomethyltransferase from Thermotoga petrophila (strain ATCC BAA-488 / DSM 13995 / JCM 10881 / RKU-1).